The chain runs to 432 residues: Enolase (432 aa).

(2R)-2-phosphoglycerate is bound at residue Q168. E210 serves as the catalytic Proton donor. Mg(2+)-binding residues include D247, E288, and D315. Residues K340, R369, S370, and K391 each coordinate (2R)-2-phosphoglycerate. K340 serves as the catalytic Proton acceptor.

Belongs to the enolase family. It depends on Mg(2+) as a cofactor.

It localises to the cytoplasm. Its subcellular location is the secreted. The protein resides in the cell surface. It carries out the reaction (2R)-2-phosphoglycerate = phosphoenolpyruvate + H2O. Its pathway is carbohydrate degradation; glycolysis; pyruvate from D-glyceraldehyde 3-phosphate: step 4/5. In terms of biological role, catalyzes the reversible conversion of 2-phosphoglycerate (2-PG) into phosphoenolpyruvate (PEP). It is essential for the degradation of carbohydrates via glycolysis. The protein is Enolase of Microcystis aeruginosa (strain NIES-843 / IAM M-2473).